Reading from the N-terminus, the 250-residue chain is Probable S-methyl-5'-thioinosine phosphorylase (250 aa).

Phosphate is bound by residues T14 and R56–H57. Residue M189 coordinates substrate. Position 190 (T190) interacts with phosphate. N213–A215 serves as a coordination point for substrate.

Belongs to the PNP/MTAP phosphorylase family. MTAP subfamily. In terms of assembly, homotrimer.

The enzyme catalyses S-methyl-5'-thioinosine + phosphate = 5-(methylsulfanyl)-alpha-D-ribose 1-phosphate + hypoxanthine. Its pathway is purine metabolism; purine nucleoside salvage. In terms of biological role, catalyzes the reversible phosphorylation of S-methyl-5'-thioinosine (MTI) to hypoxanthine and 5-methylthioribose-1-phosphate. Involved in the breakdown of S-methyl-5'-thioadenosine (MTA), a major by-product of polyamine biosynthesis. Catabolism of (MTA) occurs via deamination to MTI and phosphorolysis to hypoxanthine. The polypeptide is Probable S-methyl-5'-thioinosine phosphorylase (Xanthomonas campestris pv. campestris (strain ATCC 33913 / DSM 3586 / NCPPB 528 / LMG 568 / P 25)).